Here is a 531-residue protein sequence, read N- to C-terminus: Arginine--tRNA ligase (531 aa).

The 'HIGH' region signature appears at 113–123; it reads ANPTGPLHIGH.

It belongs to the class-I aminoacyl-tRNA synthetase family. Monomer.

Its subcellular location is the cytoplasm. It catalyses the reaction tRNA(Arg) + L-arginine + ATP = L-arginyl-tRNA(Arg) + AMP + diphosphate. The polypeptide is Arginine--tRNA ligase (Campylobacter lari (strain RM2100 / D67 / ATCC BAA-1060)).